We begin with the raw amino-acid sequence, 199 residues long: Recombination protein RecR (199 aa).

The C4-type zinc finger occupies Cys-57–Cys-72. A Toprim domain is found at Gly-81–Pro-176.

The protein belongs to the RecR family.

Functionally, may play a role in DNA repair. It seems to be involved in an RecBC-independent recombinational process of DNA repair. It may act with RecF and RecO. The polypeptide is Recombination protein RecR (Shewanella frigidimarina (strain NCIMB 400)).